A 367-amino-acid chain; its full sequence is Phosphoribosylaminoimidazole-succinocarboxamide synthase (367 aa).

It belongs to the SAICAR synthetase family.

The catalysed reaction is 5-amino-1-(5-phospho-D-ribosyl)imidazole-4-carboxylate + L-aspartate + ATP = (2S)-2-[5-amino-1-(5-phospho-beta-D-ribosyl)imidazole-4-carboxamido]succinate + ADP + phosphate + 2 H(+). The protein operates within purine metabolism; IMP biosynthesis via de novo pathway; 5-amino-1-(5-phospho-D-ribosyl)imidazole-4-carboxamide from 5-amino-1-(5-phospho-D-ribosyl)imidazole-4-carboxylate: step 1/2. The polypeptide is Phosphoribosylaminoimidazole-succinocarboxamide synthase (Shewanella baltica (strain OS185)).